Reading from the N-terminus, the 238-residue chain is Pre-protein VI (238 aa).

A propeptide spanning residues 1–33 (MDAVNFSILAPRYGSHPMMSAWSGIGTSDMNGG) is cleaved from the precursor. The interval 34 to 54 (AFNWGGIWSGIKNFGSNVKNW) is amphipathic alpha-helix essential for membrane lytic activity. The tract at residues 36-53 (NWGGIWSGIKNFGSNVKN) is involved in endosomal membrane lysis. Positions 48–74 (GSNVKNWGSRAWNSQTGKLLRQKLNDT) are interaction with hexon protein. Residues 67 to 76 (LRQKLNDTKV) carry the Nuclear export signal motif. The PPXY motif motif lies at 153-156 (PPSY). The tract at residues 187–212 (TLELKPSDQPPPYSPQSSNMPVTAPV) is disordered. The Nuclear export signal signature appears at 219–230 (GTLANIVGVGLS). An interaction with hexon protein region spans residues 221–227 (LANIVGV). The tract at residues 228 to 238 (GLSNVKRRRCF) is binds to importin alpha/beta, involved in hexon nuclear import. Positions 233-236 (KRRR) match the Nuclear localization signal motif.

Belongs to the adenoviridae protein VI family. In terms of assembly, interacts with hexon protein; this interaction allows nuclear import of hexon trimers and possibly pre-capsid assembly. Interacts (via C-terminal NLS) with importin alpha/beta. As to quaternary structure, interacts (via PPxY motif) with host NEDD4 ubiquitine ligase; this interaction might play a role in virus intracellular transport during entry. Part of a complex composed of the core-capsid bridging protein, the endosome lysis protein VI and the hexon-linking protein VIII; these interactions bridge the virus core to the capsid. Interacts with peripentonal hexons; this interaction stabilizes the capsid by gluing two peripentonal hexons together and joining them with an adjacent group-of-nine hexon. Heterodimer with the viral protease; disulfide-linked. Interacts with the viral protease. Post-translationally, ubiquitinated by Nedd4 following partial capsid disassembly; which might play a role in intracellular virus movement during entry. Contains the major nuclear import and export signals. Proteolytically removed during virion maturation. The processing of the C-terminus turns the precursor into a mature viral structural protein and abrogates its ability to promote hexon import and act as a potential chaperone protein.

The protein resides in the host nucleus. It localises to the host cytoplasm. It is found in the virion. During virus assembly, promotes hexon trimers nuclear import through nuclear pore complexes via an importin alpha/beta-dependent mechanism. By analogy to herpesviruses capsid assembly, might act as a chaperone to promote the formation of the icosahedral capsid. In terms of biological role, structural component of the virion that provides increased stability to the particle shell through its interaction with the core-capsid bridging protein and the hexon-linking protein VIII. Fibers shedding during virus entry into host cell allows the endosome lysis protein to be exposed as a membrane-lytic peptide. Exhibits pH-independent membrane fragmentation activity and probably mediates viral rapid escape from host endosome via organellar membrane lysis. It is not clear if it then remains partially associated with the capsid and involved in the intracellular microtubule-dependent transport of capsid to the nucleus, or if it is lost during endosomal penetration. Functionally, cofactor that activates the viral protease. Binds to viral protease in a 1:1 ratio. This is Pre-protein VI from Canine adenovirus serotype 1 (strain CLL) (CAdV-1).